The following is a 120-amino-acid chain: Non-specific lipid-transfer protein (120 aa).

A signal peptide spans 1–26 (MASSMSLKLACVVVLCMVVGAPLAQG). Cystine bridges form between cysteine 40-cysteine 56, cysteine 57-cysteine 102, and cysteine 77-cysteine 116.

This sequence belongs to the plant LTP family.

Functionally, plant non-specific lipid-transfer proteins transfer phospholipids as well as galactolipids across membranes. May play a role in wax or cutin deposition in the cell walls of expanding epidermal cells and certain secretory tissues. The chain is Non-specific lipid-transfer protein from Gossypium hirsutum (Upland cotton).